We begin with the raw amino-acid sequence, 166 residues long: NADH-quinone oxidoreductase subunit B 1 (166 aa).

The [4Fe-4S] cluster site is built by C39, C40, C106, and C135.

It belongs to the complex I 20 kDa subunit family. NDH-1 is composed of 14 different subunits. Subunits NuoB, C, D, E, F, and G constitute the peripheral sector of the complex. It depends on [4Fe-4S] cluster as a cofactor.

It localises to the cell membrane. The catalysed reaction is a quinone + NADH + 5 H(+)(in) = a quinol + NAD(+) + 4 H(+)(out). NDH-1 shuttles electrons from NADH, via FMN and iron-sulfur (Fe-S) centers, to quinones in the respiratory chain. The immediate electron acceptor for the enzyme in this species is believed to be a menaquinone. Couples the redox reaction to proton translocation (for every two electrons transferred, four hydrogen ions are translocated across the cytoplasmic membrane), and thus conserves the redox energy in a proton gradient. In Symbiobacterium thermophilum (strain DSM 24528 / JCM 14929 / IAM 14863 / T), this protein is NADH-quinone oxidoreductase subunit B 1.